We begin with the raw amino-acid sequence, 211 residues long: Superoxide dismutase [Fe] (211 aa).

Residues H31, H79, D165, and H169 each coordinate Fe cation.

The protein belongs to the iron/manganese superoxide dismutase family. In terms of assembly, homotetramer. Requires Fe cation as cofactor.

The enzyme catalyses 2 superoxide + 2 H(+) = H2O2 + O2. In terms of biological role, destroys superoxide anion radicals which are normally produced within the cells and which are toxic to biological systems. This chain is Superoxide dismutase [Fe] (sod), found in Pyrobaculum aerophilum (strain ATCC 51768 / DSM 7523 / JCM 9630 / CIP 104966 / NBRC 100827 / IM2).